A 338-amino-acid polypeptide reads, in one-letter code: Ribosomal RNA small subunit methyltransferase H (338 aa).

Residues 53 to 55 (GGH), aspartate 72, tyrosine 99, aspartate 123, and glutamine 130 each bind S-adenosyl-L-methionine. Residues 277–298 (ITPRSKSKSPEGLPVELPGMGP) form a disordered region.

It belongs to the methyltransferase superfamily. RsmH family.

It localises to the cytoplasm. The enzyme catalyses cytidine(1402) in 16S rRNA + S-adenosyl-L-methionine = N(4)-methylcytidine(1402) in 16S rRNA + S-adenosyl-L-homocysteine + H(+). Specifically methylates the N4 position of cytidine in position 1402 (C1402) of 16S rRNA. The polypeptide is Ribosomal RNA small subunit methyltransferase H (Rhodococcus opacus (strain B4)).